The sequence spans 622 residues: Chaperone protein HscA homolog (622 aa).

Belongs to the heat shock protein 70 family.

Its function is as follows. Chaperone involved in the maturation of iron-sulfur cluster-containing proteins. Has a low intrinsic ATPase activity which is markedly stimulated by HscB. In Burkholderia orbicola (strain MC0-3), this protein is Chaperone protein HscA homolog.